We begin with the raw amino-acid sequence, 272 residues long: NAD kinase (272 aa).

Asp62 functions as the Proton acceptor in the catalytic mechanism. NAD(+) is bound by residues 62–63 (DG), Arg67, 129–130 (NE), Arg140, Lys157, Asp159, 170–175 (SSYSSS), Ala194, and Gln229.

This sequence belongs to the NAD kinase family. A divalent metal cation serves as cofactor.

It is found in the cytoplasm. It catalyses the reaction NAD(+) + ATP = ADP + NADP(+) + H(+). In terms of biological role, involved in the regulation of the intracellular balance of NAD and NADP, and is a key enzyme in the biosynthesis of NADP. Catalyzes specifically the phosphorylation on 2'-hydroxyl of the adenosine moiety of NAD to yield NADP. This is NAD kinase from Thermoplasma volcanium (strain ATCC 51530 / DSM 4299 / JCM 9571 / NBRC 15438 / GSS1).